Consider the following 326-residue polypeptide: tRNA-modifying protein YgfZ (326 aa).

Folate-binding residues include tryptophan 27 and tryptophan 189.

Belongs to the tRNA-modifying YgfZ family.

The protein localises to the cytoplasm. Folate-binding protein involved in regulating the level of ATP-DnaA and in the modification of some tRNAs. It is probably a key factor in regulatory networks that act via tRNA modification, such as initiation of chromosomal replication. The sequence is that of tRNA-modifying protein YgfZ from Escherichia coli (strain SMS-3-5 / SECEC).